We begin with the raw amino-acid sequence, 442 residues long: UDP-N-acetylmuramate--L-alanine ligase (442 aa).

110–116 is a binding site for ATP; the sequence is GAHGKTS.

The protein belongs to the MurCDEF family.

It localises to the cytoplasm. The catalysed reaction is UDP-N-acetyl-alpha-D-muramate + L-alanine + ATP = UDP-N-acetyl-alpha-D-muramoyl-L-alanine + ADP + phosphate + H(+). The protein operates within cell wall biogenesis; peptidoglycan biosynthesis. In terms of biological role, cell wall formation. This is UDP-N-acetylmuramate--L-alanine ligase from Streptococcus thermophilus (strain ATCC BAA-491 / LMD-9).